Reading from the N-terminus, the 125-residue chain is UPF0738 protein GK0828 (125 aa).

Belongs to the UPF0738 family.

This is UPF0738 protein GK0828 from Geobacillus kaustophilus (strain HTA426).